The primary structure comprises 479 residues: Monodictyphenone cluster transcriptional coactivator mdpA (479 aa).

The HTH iclR-type domain occupies Leu-77 to Leu-147. A DNA-binding region (H-T-H motif) is located at residues Ile-107–Arg-126. Disordered stretches follow at residues Gly-281–Asp-305 and Thr-314–Ser-333. Pro residues predominate over residues His-289–Pro-298. A compositionally biased stretch (low complexity) spans Thr-314–His-323.

Its subcellular location is the nucleus. Functionally, transcriptional coactivator; part of the gene cluster that mediates the biosynthesis of monodictyphenone, a prenyl xanthone derivative. With mdpE, coregulates the production of monodictyphenone. The chain is Monodictyphenone cluster transcriptional coactivator mdpA from Emericella nidulans (strain FGSC A4 / ATCC 38163 / CBS 112.46 / NRRL 194 / M139) (Aspergillus nidulans).